The primary structure comprises 213 residues: Pyrrolidone-carboxylate peptidase (213 aa).

Residues E78, C141, and H165 contribute to the active site.

Belongs to the peptidase C15 family. As to quaternary structure, homotetramer.

It is found in the cytoplasm. It carries out the reaction Release of an N-terminal pyroglutamyl group from a polypeptide, the second amino acid generally not being Pro.. Its function is as follows. Removes 5-oxoproline from various penultimate amino acid residues except L-proline. The protein is Pyrrolidone-carboxylate peptidase of Staphylococcus carnosus (strain TM300).